Consider the following 247-residue polypeptide: UPF0309 protein Lm4b_02611 (247 aa).

The 184-residue stretch at valine 31 to proline 214 folds into the SIS domain.

Belongs to the UPF0309 family.

In Listeria monocytogenes serotype 4b (strain CLIP80459), this protein is UPF0309 protein Lm4b_02611.